We begin with the raw amino-acid sequence, 63 residues long: MVFQLVCSTCGKDISHERYKLIIRKKSLKDVLVSVKNECCRLKLSTQIEPQRNLTVQPLLDIN.

This sequence belongs to the poxviridae DNA-directed RNA polymerase 7 kDa subunit family. The DNA-dependent RNA polymerase (vRNAP) consists of eight subunits encoded by early viral genes and termed according to their apparent molecular masses Rpo147, Rpo132, Rpo35, Rpo30, Rpo22, Rpo19, Rpo18, and Rpo7. The same holoenzyme, with the addition of the transcription-specificity factor RAP94, is used for early gene expression.

It is found in the virion. The enzyme catalyses RNA(n) + a ribonucleoside 5'-triphosphate = RNA(n+1) + diphosphate. Its function is as follows. Part of the DNA-dependent RNA polymerase which catalyzes the transcription of viral DNA into RNA using the four ribonucleoside triphosphates as substrates. Responsible for the transcription of early, intermediate and late genes. DNA-dependent RNA polymerase associates with the early transcription factor (ETF), itself composed of OPG118 and OPG134, thereby allowing the early genes transcription. Late transcription, and probably also intermediate transcription, require newly synthesized RNA polymerase. The chain is DNA-directed RNA polymerase 7 kDa subunit (OPG090) from Monkeypox virus.